A 286-amino-acid polypeptide reads, in one-letter code: Energy-coupling factor transporter ATP-binding protein EcfA2 (286 aa).

The 244-residue stretch at 3-246 folds into the ABC transporter domain; the sequence is IRFDNVSYTY…KKKLADWHIG (244 aa). Position 40–47 (40–47) interacts with ATP; it reads GQTGSGKS.

This sequence belongs to the ABC transporter superfamily. Energy-coupling factor EcfA family. As to quaternary structure, forms a stable energy-coupling factor (ECF) transporter complex composed of 2 membrane-embedded substrate-binding proteins (S component), 2 ATP-binding proteins (A component) and 2 transmembrane proteins (T component).

It is found in the cell membrane. In terms of biological role, ATP-binding (A) component of a common energy-coupling factor (ECF) ABC-transporter complex. Unlike classic ABC transporters this ECF transporter provides the energy necessary to transport a number of different substrates. The protein is Energy-coupling factor transporter ATP-binding protein EcfA2 of Staphylococcus aureus (strain USA300).